A 637-amino-acid chain; its full sequence is Chaperone protein HtpG (637 aa).

The tract at residues 1–335 (MQGTVNSERL…SSDLPLNISR (335 aa)) is a; substrate-binding. A b region spans residues 336 to 559 (ETLQNNKIIE…DGSMDIRMER (224 aa)). A c region spans residues 560 to 637 (FLREQKQLNY…RMNNVLSQIN (78 aa)).

This sequence belongs to the heat shock protein 90 family. As to quaternary structure, homodimer.

Its subcellular location is the cytoplasm. Molecular chaperone. Has ATPase activity. This chain is Chaperone protein HtpG, found in Ehrlichia ruminantium (strain Welgevonden).